The primary structure comprises 64 residues: Large ribosomal subunit protein bL35 (64 aa).

Basic residues-rich tracts occupy residues 1–15 (MPKQ…KRFR) and 23–43 (VRQK…RTRR). Positions 1–64 (MPKQKSHSGA…AGRIKRLLAR (64 aa)) are disordered.

This sequence belongs to the bacterial ribosomal protein bL35 family.

The sequence is that of Large ribosomal subunit protein bL35 from Frankia alni (strain DSM 45986 / CECT 9034 / ACN14a).